Reading from the N-terminus, the 308-residue chain is Ribosomal RNA small subunit methyltransferase H (308 aa).

Residues 33-35 (GGH), Asp-52, Phe-78, Asp-99, and Gln-106 contribute to the S-adenosyl-L-methionine site. The segment at 289-308 (EEIETNSRSRSAKLRVAEKL) is disordered.

The protein belongs to the methyltransferase superfamily. RsmH family.

It localises to the cytoplasm. It catalyses the reaction cytidine(1402) in 16S rRNA + S-adenosyl-L-methionine = N(4)-methylcytidine(1402) in 16S rRNA + S-adenosyl-L-homocysteine + H(+). Specifically methylates the N4 position of cytidine in position 1402 (C1402) of 16S rRNA. The sequence is that of Ribosomal RNA small subunit methyltransferase H from Thermoanaerobacter sp. (strain X514).